The chain runs to 130 residues: NADH-quinone oxidoreductase subunit A (130 aa).

The next 3 helical transmembrane spans lie at 15–35 (AIHV…ATII), 67–87 (FLIA…FAWA), and 95–115 (WVGL…LIYL).

It belongs to the complex I subunit 3 family. As to quaternary structure, NDH-1 is composed of 14 different subunits. Subunits NuoA, H, J, K, L, M, N constitute the membrane sector of the complex.

It is found in the cell inner membrane. The enzyme catalyses a quinone + NADH + 5 H(+)(in) = a quinol + NAD(+) + 4 H(+)(out). Functionally, NDH-1 shuttles electrons from NADH, via FMN and iron-sulfur (Fe-S) centers, to quinones in the respiratory chain. The immediate electron acceptor for the enzyme in this species is believed to be ubiquinone. Couples the redox reaction to proton translocation (for every two electrons transferred, four hydrogen ions are translocated across the cytoplasmic membrane), and thus conserves the redox energy in a proton gradient. The sequence is that of NADH-quinone oxidoreductase subunit A from Rhodopseudomonas palustris (strain BisA53).